The chain runs to 335 residues: Acetyl-coenzyme A carboxylase carboxyl transferase subunit alpha (335 aa).

The region spanning 40 to 294 (QLETLATRRR…KEAIEKHLDT (255 aa)) is the CoA carboxyltransferase C-terminal domain.

The protein belongs to the AccA family. As to quaternary structure, acetyl-CoA carboxylase is a heterohexamer composed of biotin carboxyl carrier protein (AccB), biotin carboxylase (AccC) and two subunits each of ACCase subunit alpha (AccA) and ACCase subunit beta (AccD).

It localises to the cytoplasm. The catalysed reaction is N(6)-carboxybiotinyl-L-lysyl-[protein] + acetyl-CoA = N(6)-biotinyl-L-lysyl-[protein] + malonyl-CoA. It participates in lipid metabolism; malonyl-CoA biosynthesis; malonyl-CoA from acetyl-CoA: step 1/1. In terms of biological role, component of the acetyl coenzyme A carboxylase (ACC) complex. First, biotin carboxylase catalyzes the carboxylation of biotin on its carrier protein (BCCP) and then the CO(2) group is transferred by the carboxyltransferase to acetyl-CoA to form malonyl-CoA. The chain is Acetyl-coenzyme A carboxylase carboxyl transferase subunit alpha from Prochlorococcus marinus (strain MIT 9312).